A 1615-amino-acid chain; its full sequence is Ferredoxin-dependent glutamate synthase, chloroplastic (1615 aa).

The N-terminal 52 residues, 1–52 (MATLPRAAAAAAPSPAAALLPLPRAAPLLAGRAAARSAARRLRARGTRAPPL), are a transit peptide targeting the chloroplast. The Nucleophile role is filled by Cys-97. One can recognise a Glutamine amidotransferase type-2 domain in the interval 97-496 (CGVGFVANLK…PGMMITVDLQ (400 aa)). 1175-1232 (LSETHQTLIQNGLRERVVLRVDGGFRSGLDVLMAAAMGADEYGFGSVAMIATGCVMAR) contributes to the FMN binding site. Positions 1228, 1234, and 1239 each coordinate [3Fe-4S] cluster.

It belongs to the glutamate synthase family. [3Fe-4S] cluster serves as cofactor. It depends on FAD as a cofactor. FMN is required as a cofactor. In terms of tissue distribution, expressed in leaf blades and at lower levels in roots.

Its subcellular location is the plastid. It localises to the chloroplast. It catalyses the reaction 2 oxidized [2Fe-2S]-[ferredoxin] + 2 L-glutamate = L-glutamine + 2 reduced [2Fe-2S]-[ferredoxin] + 2-oxoglutarate + 2 H(+). It participates in amino-acid biosynthesis; L-glutamate biosynthesis via GLT pathway; L-glutamate from 2-oxoglutarate and L-glutamine (ferredoxin route): step 1/1. It functions in the pathway energy metabolism; nitrogen metabolism. Its function is as follows. Involved in glutamate biosynthesis in leaf. Required for the reassimilation of ammonium ions generated during photorespiration. The chain is Ferredoxin-dependent glutamate synthase, chloroplastic (GLU) from Oryza sativa subsp. japonica (Rice).